The chain runs to 467 residues: tRNA dimethylallyltransferase (467 aa).

The transit peptide at 1–47 (MASVAAARAVPVGSGLRGLQRTLPLVVILGATGTGKSTLALQLGQRL) directs the protein to the mitochondrion. A dimethylallyl diphosphate-binding site is contributed by 32 to 37 (TGTGKS). Interaction with substrate tRNA stretches follow at residues 55–58 (DSMQ) and 183–187 (RKVAR). Residues 221 to 230 (FSNPCILWLH) form a core aggregation region region. The tract at residues 233 to 255 (QAVLDERLDKRVDDMLAAGLLEE) is interaction with isopentenylpyrophosphate transferase. Interaction with substrate tRNA stretches follow at residues 281–283 (QSI) and 313–331 (ALKQ…WVKN). A Matrin-type zinc finger spans residues 395–425 (HLCDLCDRIIIGDREWAAHIKSKSHLNQLKK). Residues 429 to 467 (LDSDAVNTIESQSVSPDHNKEPKEKGSPGQNDQELKCSV) form a disordered region. Residues 433–444 (AVNTIESQSVSP) are compositionally biased toward polar residues. Ser-443 carries the post-translational modification Phosphoserine. The span at 445–454 (DHNKEPKEKG) shows a compositional bias: basic and acidic residues. Ser-455 carries the phosphoserine modification.

It belongs to the IPP transferase family.

The protein resides in the mitochondrion. Its subcellular location is the cytoplasm. The enzyme catalyses adenosine(37) in tRNA + dimethylallyl diphosphate = N(6)-dimethylallyladenosine(37) in tRNA + diphosphate. Catalyzes the transfer of a dimethylallyl group onto the adenine at position 37 of both cytosolic and mitochondrial tRNAs, leading to the formation of N6-(dimethylallyl)adenosine (i6A37). Mediates modification of a limited subset of tRNAs: tRNA(Ser)(AGA), tRNA(Ser)(CGA), tRNA(Ser)(UGA), as well as partial modification of the selenocysteine tRNA(Ser)(UCA). TRIT1 is therefore required for selenoprotein expression. This chain is tRNA dimethylallyltransferase (TRIT1), found in Homo sapiens (Human).